A 260-amino-acid chain; its full sequence is Hydroxyethylthiazole kinase 2 (260 aa).

Methionine 40 is a binding site for substrate. Arginine 116 and threonine 161 together coordinate ATP. Residue alanine 188 participates in substrate binding.

It belongs to the Thz kinase family. Mg(2+) serves as cofactor.

It catalyses the reaction 5-(2-hydroxyethyl)-4-methylthiazole + ATP = 4-methyl-5-(2-phosphooxyethyl)-thiazole + ADP + H(+). It functions in the pathway cofactor biosynthesis; thiamine diphosphate biosynthesis; 4-methyl-5-(2-phosphoethyl)-thiazole from 5-(2-hydroxyethyl)-4-methylthiazole: step 1/1. Catalyzes the phosphorylation of the hydroxyl group of 4-methyl-5-beta-hydroxyethylthiazole (THZ). The protein is Hydroxyethylthiazole kinase 2 of Oceanobacillus iheyensis (strain DSM 14371 / CIP 107618 / JCM 11309 / KCTC 3954 / HTE831).